We begin with the raw amino-acid sequence, 230 residues long: Orotidine 5'-phosphate decarboxylase (230 aa).

Residues aspartate 10, lysine 31, 58–67, threonine 117, arginine 179, glutamine 188, glycine 208, and arginine 209 each bind substrate; that span reads DLKLHDIPNT. The active-site Proton donor is lysine 60.

It belongs to the OMP decarboxylase family. Type 1 subfamily. As to quaternary structure, homodimer.

The catalysed reaction is orotidine 5'-phosphate + H(+) = UMP + CO2. It functions in the pathway pyrimidine metabolism; UMP biosynthesis via de novo pathway; UMP from orotate: step 2/2. Functionally, catalyzes the decarboxylation of orotidine 5'-monophosphate (OMP) to uridine 5'-monophosphate (UMP). In Staphylococcus aureus (strain bovine RF122 / ET3-1), this protein is Orotidine 5'-phosphate decarboxylase.